Here is a 480-residue protein sequence, read N- to C-terminus: Aspartyl/glutamyl-tRNA(Asn/Gln) amidotransferase subunit B (480 aa).

Belongs to the GatB/GatE family. GatB subfamily. Heterotrimer of A, B and C subunits.

It catalyses the reaction L-glutamyl-tRNA(Gln) + L-glutamine + ATP + H2O = L-glutaminyl-tRNA(Gln) + L-glutamate + ADP + phosphate + H(+). It carries out the reaction L-aspartyl-tRNA(Asn) + L-glutamine + ATP + H2O = L-asparaginyl-tRNA(Asn) + L-glutamate + ADP + phosphate + 2 H(+). In terms of biological role, allows the formation of correctly charged Asn-tRNA(Asn) or Gln-tRNA(Gln) through the transamidation of misacylated Asp-tRNA(Asn) or Glu-tRNA(Gln) in organisms which lack either or both of asparaginyl-tRNA or glutaminyl-tRNA synthetases. The reaction takes place in the presence of glutamine and ATP through an activated phospho-Asp-tRNA(Asn) or phospho-Glu-tRNA(Gln). This Hahella chejuensis (strain KCTC 2396) protein is Aspartyl/glutamyl-tRNA(Asn/Gln) amidotransferase subunit B.